Reading from the N-terminus, the 403-residue chain is Phosphopentomutase (403 aa).

Residues Asp13, Asp298, His303, Asp339, His340, and His351 each contribute to the Mn(2+) site.

The protein belongs to the phosphopentomutase family. It depends on Mn(2+) as a cofactor.

It localises to the cytoplasm. The enzyme catalyses 2-deoxy-alpha-D-ribose 1-phosphate = 2-deoxy-D-ribose 5-phosphate. It carries out the reaction alpha-D-ribose 1-phosphate = D-ribose 5-phosphate. It functions in the pathway carbohydrate degradation; 2-deoxy-D-ribose 1-phosphate degradation; D-glyceraldehyde 3-phosphate and acetaldehyde from 2-deoxy-alpha-D-ribose 1-phosphate: step 1/2. In terms of biological role, isomerase that catalyzes the conversion of deoxy-ribose 1-phosphate (dRib-1-P) and ribose 1-phosphate (Rib-1-P) to deoxy-ribose 5-phosphate (dRib-5-P) and ribose 5-phosphate (Rib-5-P), respectively. In Streptococcus thermophilus (strain ATCC BAA-250 / LMG 18311), this protein is Phosphopentomutase.